A 182-amino-acid polypeptide reads, in one-letter code: MRITVSGLPGSGTTSLSRYLSERYGFTMISAGEVFRQCAKEHNMELAEFGRLAEKDPAYDKMIDARQKEIAEKSDNIIVEGRLSGWMVENADLKIWLFAPISCRLDRIVFRDQIADVETAKAITLEREHCEAIRYQQYYSIDINDHSVYHLILNSEHWGVDDLGKIVAAAIDQLKKTPFAAS.

G7–S15 is a binding site for ATP.

The protein belongs to the cytidylate kinase family. Type 2 subfamily.

It is found in the cytoplasm. The enzyme catalyses CMP + ATP = CDP + ADP. It carries out the reaction dCMP + ATP = dCDP + ADP. This is Cytidylate kinase from Methanoregula boonei (strain DSM 21154 / JCM 14090 / 6A8).